A 364-amino-acid chain; its full sequence is tRNA 2-selenouridine synthase (364 aa).

In terms of domain architecture, Rhodanese spans 14–137 (LIADTPIIDV…LRQTAIQATI (124 aa)). The active-site S-selanylcysteine intermediate is the Cys-97.

This sequence belongs to the SelU family. Monomer.

It carries out the reaction 5-methylaminomethyl-2-thiouridine(34) in tRNA + selenophosphate + (2E)-geranyl diphosphate + H2O + H(+) = 5-methylaminomethyl-2-selenouridine(34) in tRNA + (2E)-thiogeraniol + phosphate + diphosphate. The enzyme catalyses 5-methylaminomethyl-2-thiouridine(34) in tRNA + (2E)-geranyl diphosphate = 5-methylaminomethyl-S-(2E)-geranyl-thiouridine(34) in tRNA + diphosphate. The catalysed reaction is 5-methylaminomethyl-S-(2E)-geranyl-thiouridine(34) in tRNA + selenophosphate + H(+) = 5-methylaminomethyl-2-(Se-phospho)selenouridine(34) in tRNA + (2E)-thiogeraniol. It catalyses the reaction 5-methylaminomethyl-2-(Se-phospho)selenouridine(34) in tRNA + H2O = 5-methylaminomethyl-2-selenouridine(34) in tRNA + phosphate. Its function is as follows. Involved in the post-transcriptional modification of the uridine at the wobble position (U34) of tRNA(Lys), tRNA(Glu) and tRNA(Gln). Catalyzes the conversion of 2-thiouridine (S2U-RNA) to 2-selenouridine (Se2U-RNA). Acts in a two-step process involving geranylation of 2-thiouridine (S2U) to S-geranyl-2-thiouridine (geS2U) and subsequent selenation of the latter derivative to 2-selenouridine (Se2U) in the tRNA chain. This is tRNA 2-selenouridine synthase from Escherichia coli (strain SMS-3-5 / SECEC).